Consider the following 331-residue polypeptide: Vitamin B12 import system permease protein BtuC (331 aa).

The next 9 helical transmembrane spans lie at 20-42 (LLIG…WLSP), 62-84 (LLAA…VLLG), 91-113 (GVVG…FPSL), 117-136 (VAFM…LLVV), 148-170 (LLLV…FYFS), 190-209 (SWYQ…WLVL), 240-262 (LAIA…VGLV), 277-299 (LLLP…IARL), and 306-325 (LPLG…WMLV).

This sequence belongs to the binding-protein-dependent transport system permease family. FecCD subfamily. As to quaternary structure, the complex is composed of two ATP-binding proteins (BtuD), two transmembrane proteins (BtuC) and a solute-binding protein (BtuF).

The protein localises to the cell inner membrane. Functionally, part of the ABC transporter complex BtuCDF involved in vitamin B12 import. Involved in the translocation of the substrate across the membrane. The polypeptide is Vitamin B12 import system permease protein BtuC (Vibrio cholerae serotype O1 (strain ATCC 39315 / El Tor Inaba N16961)).